Reading from the N-terminus, the 337-residue chain is GTPase Obg (337 aa).

Residues 1-161 (MNLTDNAVIF…FKIKLDFVFL (161 aa)) form the Obg domain. The region spanning 162–333 (ADVGLFGYSN…LINKILLFLE (172 aa)) is the OBG-type G domain. Residues 168–175 (GYSNTGRS), 193–197 (FTTLF), 214–217 (DIPS), 282–285 (NKTD), and 314–316 (SLN) each bind GTP. Residues Ser-175 and Thr-195 each contribute to the Mg(2+) site.

The protein belongs to the TRAFAC class OBG-HflX-like GTPase superfamily. OBG GTPase family. As to quaternary structure, monomer. Mg(2+) is required as a cofactor.

Its subcellular location is the cytoplasm. Its function is as follows. An essential GTPase which binds GTP, GDP and possibly (p)ppGpp with moderate affinity, with high nucleotide exchange rates and a fairly low GTP hydrolysis rate. Plays a role in control of the cell cycle, stress response, ribosome biogenesis and in those bacteria that undergo differentiation, in morphogenesis control. The protein is GTPase Obg of Wigglesworthia glossinidia brevipalpis.